Here is a 507-residue protein sequence, read N- to C-terminus: Maturase K (507 aa).

Belongs to the intron maturase 2 family. MatK subfamily.

It localises to the plastid. The protein resides in the chloroplast. In terms of biological role, usually encoded in the trnK tRNA gene intron. Probably assists in splicing its own and other chloroplast group II introns. The polypeptide is Maturase K (Kalmia procumbens (Alpine azalea)).